Consider the following 470-residue polypeptide: Glutamate--tRNA ligase (470 aa).

The 'HIGH' region motif lies at P9 to G19. The 'KMSKS' region motif lies at R236 to R240. K239 is a binding site for ATP.

Belongs to the class-I aminoacyl-tRNA synthetase family. Glutamate--tRNA ligase type 1 subfamily. As to quaternary structure, monomer.

The protein resides in the cytoplasm. It carries out the reaction tRNA(Glu) + L-glutamate + ATP = L-glutamyl-tRNA(Glu) + AMP + diphosphate. Functionally, catalyzes the attachment of glutamate to tRNA(Glu) in a two-step reaction: glutamate is first activated by ATP to form Glu-AMP and then transferred to the acceptor end of tRNA(Glu). In Colwellia psychrerythraea (strain 34H / ATCC BAA-681) (Vibrio psychroerythus), this protein is Glutamate--tRNA ligase.